A 443-amino-acid polypeptide reads, in one-letter code: UDP-N-acetylmuramate--L-alanine ligase (443 aa).

ATP is bound at residue 110–116 (GAHGKTS).

Belongs to the MurCDEF family.

Its subcellular location is the cytoplasm. It catalyses the reaction UDP-N-acetyl-alpha-D-muramate + L-alanine + ATP = UDP-N-acetyl-alpha-D-muramoyl-L-alanine + ADP + phosphate + H(+). Its pathway is cell wall biogenesis; peptidoglycan biosynthesis. Cell wall formation. This Streptococcus agalactiae serotype Ia (strain ATCC 27591 / A909 / CDC SS700) protein is UDP-N-acetylmuramate--L-alanine ligase.